A 241-amino-acid chain; its full sequence is Uridylate kinase (241 aa).

9 to 10 (GS) provides a ligand contact to ATP. Residue G44 participates in UMP binding. ATP-binding residues include G45 and R49. UMP-binding positions include D66 and 114–120 (VVAGQTT). Residues T140, F146, and D149 each coordinate ATP.

The protein belongs to the UMP kinase family. As to quaternary structure, homohexamer.

Its subcellular location is the cytoplasm. It carries out the reaction UMP + ATP = UDP + ADP. The protein operates within pyrimidine metabolism; CTP biosynthesis via de novo pathway; UDP from UMP (UMPK route): step 1/1. Inhibited by UTP. Its function is as follows. Catalyzes the reversible phosphorylation of UMP to UDP. This chain is Uridylate kinase, found in Halobacterium salinarum (strain ATCC 29341 / DSM 671 / R1).